The sequence spans 523 residues: Translation initiation factor eIF2B subunit delta (523 aa).

The segment at 1-154 (MAAVAVAVRE…EHTQADDPTL (154 aa)) is disordered. A2 bears the N-acetylalanine mark. The residue at position 12 (S12) is a Phosphoserine. Over residues 31 to 40 (MTQEEKLQLR) the composition is skewed to basic and acidic residues. Residues 41–51 (KEKKQQKKKRK) are compositionally biased toward basic residues. T85 is modified (phosphothreonine). The segment covering 95 to 120 (TKAELRAERRAKQEAERALKQARKGE) has biased composition (basic and acidic residues). S129 is modified (phosphoserine). The may bind the chemical integrated stress response (ISR) inhibitor ISRIB stretch occupies residues 170-179 (RKDYGSKVSL).

It belongs to the eIF-2B alpha/beta/delta subunits family. In terms of assembly, component of the translation initiation factor 2B (eIF2B) complex which is a heterodecamer of two sets of five different subunits: alpha, beta, gamma, delta and epsilon. Subunits alpha, beta and delta comprise a regulatory subcomplex and subunits epsilon and gamma comprise a catalytic subcomplex. Within the complex, the hexameric regulatory complex resides at the center, with the two heterodimeric catalytic subcomplexes bound on opposite sides.

It localises to the cytoplasm. The protein localises to the cytosol. Its activity is regulated as follows. Activated by the chemical integrated stress response (ISR) inhibitor ISRIB which stimulates guanine nucleotide exchange factor activity for both phosphorylated and unphosphorylated eIF2. In terms of biological role, acts as a component of the translation initiation factor 2B (eIF2B) complex, which catalyzes the exchange of GDP for GTP on eukaryotic initiation factor 2 (eIF2) gamma subunit. Its guanine nucleotide exchange factor activity is repressed when bound to eIF2 complex phosphorylated on the alpha subunit, thereby limiting the amount of methionyl-initiator methionine tRNA available to the ribosome and consequently global translation is repressed. This Oryctolagus cuniculus (Rabbit) protein is Translation initiation factor eIF2B subunit delta (EIF2B4).